The sequence spans 398 residues: Bifunctional enzyme IspD/IspF (398 aa).

The interval 1 to 234 (MAKSQRTAVV…ARLAAQLGDI (234 aa)) is 2-C-methyl-D-erythritol 4-phosphate cytidylyltransferase. Residues 235-398 (RTGTGYDVHA…LPFNEKTWSV (164 aa)) are 2-C-methyl-D-erythritol 2,4-cyclodiphosphate synthase. A divalent metal cation-binding residues include aspartate 241 and histidine 243. Residues 241–243 (DVH) and 267–268 (HS) contribute to the 4-CDP-2-C-methyl-D-erythritol 2-phosphate site. Histidine 275 provides a ligand contact to a divalent metal cation. 4-CDP-2-C-methyl-D-erythritol 2-phosphate-binding positions include 289–291 (DIG), 365–368 (TTSE), phenylalanine 372, and arginine 375.

This sequence in the N-terminal section; belongs to the IspD/TarI cytidylyltransferase family. IspD subfamily. The protein in the C-terminal section; belongs to the IspF family. It depends on a divalent metal cation as a cofactor.

It catalyses the reaction 2-C-methyl-D-erythritol 4-phosphate + CTP + H(+) = 4-CDP-2-C-methyl-D-erythritol + diphosphate. It carries out the reaction 4-CDP-2-C-methyl-D-erythritol 2-phosphate = 2-C-methyl-D-erythritol 2,4-cyclic diphosphate + CMP. It participates in isoprenoid biosynthesis; isopentenyl diphosphate biosynthesis via DXP pathway; isopentenyl diphosphate from 1-deoxy-D-xylulose 5-phosphate: step 2/6. It functions in the pathway isoprenoid biosynthesis; isopentenyl diphosphate biosynthesis via DXP pathway; isopentenyl diphosphate from 1-deoxy-D-xylulose 5-phosphate: step 4/6. Bifunctional enzyme that catalyzes the formation of 4-diphosphocytidyl-2-C-methyl-D-erythritol from CTP and 2-C-methyl-D-erythritol 4-phosphate (MEP) (IspD), and catalyzes the conversion of 4-diphosphocytidyl-2-C-methyl-D-erythritol 2-phosphate (CDP-ME2P) to 2-C-methyl-D-erythritol 2,4-cyclodiphosphate (ME-CPP) with a corresponding release of cytidine 5-monophosphate (CMP) (IspF). This is Bifunctional enzyme IspD/IspF from Bradyrhizobium diazoefficiens (strain JCM 10833 / BCRC 13528 / IAM 13628 / NBRC 14792 / USDA 110).